An 806-amino-acid chain; its full sequence is Phenylalanine--tRNA ligase beta subunit (806 aa).

Residues 40–155 enclose the tRNA-binding domain; the sequence is NKGVKGVVVG…SDAEVGADAL (116 aa). Residues 409–484 form the B5 domain; that stretch reads VQERTVSVTA…RLYGYDHIPV (76 aa). Mg(2+) is bound by residues Asp462, Asp468, Glu471, and Glu472. Residues 712-805 form the FDX-ACB domain; the sequence is PRFPSMTRDM…VEEKFGAELR (94 aa).

The protein belongs to the phenylalanyl-tRNA synthetase beta subunit family. Type 1 subfamily. As to quaternary structure, tetramer of two alpha and two beta subunits. Requires Mg(2+) as cofactor.

The protein localises to the cytoplasm. The catalysed reaction is tRNA(Phe) + L-phenylalanine + ATP = L-phenylalanyl-tRNA(Phe) + AMP + diphosphate + H(+). The sequence is that of Phenylalanine--tRNA ligase beta subunit from Bacillus thuringiensis subsp. konkukian (strain 97-27).